We begin with the raw amino-acid sequence, 824 residues long: Phenylalanine--tRNA ligase beta subunit (824 aa).

A tRNA-binding domain is found at 39–153 (SEQAKNVVIG…NIPPIGSNAV (115 aa)). Residues 414 to 507 (KKSISVNLRM…RLIGYDNFDS (94 aa)) form the B5 domain. The Mg(2+) site is built by Asp-485, Asp-491, Glu-494, and Glu-495. Residues 730–823 (PTVPYMERDI…LKEKIKAELR (94 aa)) form the FDX-ACB domain.

Belongs to the phenylalanyl-tRNA synthetase beta subunit family. Type 1 subfamily. Tetramer of two alpha and two beta subunits. Mg(2+) serves as cofactor.

The protein resides in the cytoplasm. The enzyme catalyses tRNA(Phe) + L-phenylalanine + ATP = L-phenylalanyl-tRNA(Phe) + AMP + diphosphate + H(+). This Prochlorococcus marinus (strain NATL2A) protein is Phenylalanine--tRNA ligase beta subunit.